A 200-amino-acid polypeptide reads, in one-letter code: ATP synthase subunit b 1 (200 aa).

A helical membrane pass occupies residues alanine 14 to alanine 34.

It belongs to the ATPase B chain family. In terms of assembly, F-type ATPases have 2 components, F(1) - the catalytic core - and F(0) - the membrane proton channel. F(1) has five subunits: alpha(3), beta(3), gamma(1), delta(1), epsilon(1). F(0) has three main subunits: a(1), b(2) and c(10-14). The alpha and beta chains form an alternating ring which encloses part of the gamma chain. F(1) is attached to F(0) by a central stalk formed by the gamma and epsilon chains, while a peripheral stalk is formed by the delta and b chains.

It localises to the cell inner membrane. Functionally, f(1)F(0) ATP synthase produces ATP from ADP in the presence of a proton or sodium gradient. F-type ATPases consist of two structural domains, F(1) containing the extramembraneous catalytic core and F(0) containing the membrane proton channel, linked together by a central stalk and a peripheral stalk. During catalysis, ATP synthesis in the catalytic domain of F(1) is coupled via a rotary mechanism of the central stalk subunits to proton translocation. Component of the F(0) channel, it forms part of the peripheral stalk, linking F(1) to F(0). This chain is ATP synthase subunit b 1, found in Desulfosudis oleivorans (strain DSM 6200 / JCM 39069 / Hxd3) (Desulfococcus oleovorans).